Reading from the N-terminus, the 860-residue chain is Leucine--tRNA ligase (860 aa).

Positions 42-52 match the 'HIGH' region motif; it reads PYPSGRLHMGH. Positions 619–623 match the 'KMSKS' region motif; sequence KMSKS. Residue K622 participates in ATP binding.

It belongs to the class-I aminoacyl-tRNA synthetase family.

The protein localises to the cytoplasm. It carries out the reaction tRNA(Leu) + L-leucine + ATP = L-leucyl-tRNA(Leu) + AMP + diphosphate. In Escherichia coli (strain SMS-3-5 / SECEC), this protein is Leucine--tRNA ligase.